The chain runs to 339 residues: MIDFKSIIGKVATGATLTRDEATAAFDAMMSGEATPSQMGALLMGLRVRGETVDEIAGAVSAMRAKMLTVTAPPDAVDVVGTGGDGSGSVNVSTCAAFIVAGCGAPVAKHGNRALSSRSGAADVLAALGVKIDITPDQVGRCIAEAGIGFMFAPTHHPAMKNVGPTRVELATRTIFNMLGPLSNPAGVKRQMVGVFSRQWVQPLAQVLKNLGSEAVWVVHGSDGLDEITISGPTFVAALKDGEITTFEITPEDAGLPRAPAESLKGGDAEANAAALKGVLQGKPSPYRDVALLNAGATLIVAGRAGDLKEAVALGAQSIDSGAAAARLAKLIAVSNTAE.

5-phospho-alpha-D-ribose 1-diphosphate is bound by residues Gly-81, 84–85 (GD), Ser-89, 91–94 (NVST), 109–117 (KHGNRALSS), and Ala-121. Gly-81 serves as a coordination point for anthranilate. Ser-93 is a binding site for Mg(2+). Anthranilate is bound at residue Asn-112. Arg-167 is a binding site for anthranilate. Mg(2+) contacts are provided by Asp-226 and Glu-227.

Belongs to the anthranilate phosphoribosyltransferase family. Homodimer. Requires Mg(2+) as cofactor.

The enzyme catalyses N-(5-phospho-beta-D-ribosyl)anthranilate + diphosphate = 5-phospho-alpha-D-ribose 1-diphosphate + anthranilate. The protein operates within amino-acid biosynthesis; L-tryptophan biosynthesis; L-tryptophan from chorismate: step 2/5. In terms of biological role, catalyzes the transfer of the phosphoribosyl group of 5-phosphorylribose-1-pyrophosphate (PRPP) to anthranilate to yield N-(5'-phosphoribosyl)-anthranilate (PRA). The sequence is that of Anthranilate phosphoribosyltransferase from Rhodopseudomonas palustris (strain BisA53).